We begin with the raw amino-acid sequence, 364 residues long: Uroporphyrinogen decarboxylase (364 aa).

Residues 28–32, Asp78, Tyr160, Thr215, and His333 contribute to the substrate site; that span reads RQAGR.

This sequence belongs to the uroporphyrinogen decarboxylase family. Homodimer.

The protein localises to the cytoplasm. The catalysed reaction is uroporphyrinogen III + 4 H(+) = coproporphyrinogen III + 4 CO2. The protein operates within porphyrin-containing compound metabolism; protoporphyrin-IX biosynthesis; coproporphyrinogen-III from 5-aminolevulinate: step 4/4. Catalyzes the decarboxylation of four acetate groups of uroporphyrinogen-III to yield coproporphyrinogen-III. This chain is Uroporphyrinogen decarboxylase, found in Burkholderia mallei (strain NCTC 10247).